Here is a 596-residue protein sequence, read N- to C-terminus: V-type ATP synthase alpha chain (596 aa).

ATP is bound at residue 233–240 (GPFGAGKT).

Belongs to the ATPase alpha/beta chains family.

The catalysed reaction is ATP + H2O + 4 H(+)(in) = ADP + phosphate + 5 H(+)(out). Functionally, produces ATP from ADP in the presence of a proton gradient across the membrane. The V-type alpha chain is a catalytic subunit. This is V-type ATP synthase alpha chain from Streptococcus gordonii (strain Challis / ATCC 35105 / BCRC 15272 / CH1 / DL1 / V288).